The sequence spans 39 residues: Omega-theraphotoxin-Asp1a (39 aa).

Disulfide bonds link C4–C25, C8–C31, and C17–C36.

As to expression, expressed by the venom gland.

It localises to the secreted. Toxin that inhibits voltage-gated calcium channels in rat cerebellar granule cells (IC(50)&lt;200 nM). Is lethal to cockroaches. The sequence is that of Omega-theraphotoxin-Asp1a from Aphonopelma sp. (American tarantula).